Here is a 284-residue protein sequence, read N- to C-terminus: MTAHLIDGKLIAKQVRQHVTSYVDSLTQAGKRQPGLAVVLVGSDAASQVYVSNKRKACDEVGFVSRSFDLPSDTTEETLLNLVDQLNEDKEIDGILVQLPLPAGLNAEKVLERIHPHKDVDGFHPYNIGRLAQRIPALRPCTPKGIMTMIESTKRPVKGLDAVIVGASNIVGRPMSLELLLAGCTVTTCHKFTQDLKSHVQRADLLVVAVGKPNFIPGDWVKPGAIVIDVGINRVNDGSLVGDVDFDKAKERAGWITPVPGGVGPMTVASLIENTLEAYVKYHS.

NADP(+)-binding positions include 166–168 (GAS) and I232.

The protein belongs to the tetrahydrofolate dehydrogenase/cyclohydrolase family. As to quaternary structure, homodimer.

It carries out the reaction (6R)-5,10-methylene-5,6,7,8-tetrahydrofolate + NADP(+) = (6R)-5,10-methenyltetrahydrofolate + NADPH. It catalyses the reaction (6R)-5,10-methenyltetrahydrofolate + H2O = (6R)-10-formyltetrahydrofolate + H(+). It participates in one-carbon metabolism; tetrahydrofolate interconversion. Its function is as follows. Catalyzes the oxidation of 5,10-methylenetetrahydrofolate to 5,10-methenyltetrahydrofolate and then the hydrolysis of 5,10-methenyltetrahydrofolate to 10-formyltetrahydrofolate. The chain is Bifunctional protein FolD from Alteromonas mediterranea (strain DSM 17117 / CIP 110805 / LMG 28347 / Deep ecotype).